We begin with the raw amino-acid sequence, 185 residues long: Elongation factor P (185 aa).

This sequence belongs to the elongation factor P family.

The protein resides in the cytoplasm. The protein operates within protein biosynthesis; polypeptide chain elongation. Its function is as follows. Involved in peptide bond synthesis. Stimulates efficient translation and peptide-bond synthesis on native or reconstituted 70S ribosomes in vitro. Probably functions indirectly by altering the affinity of the ribosome for aminoacyl-tRNA, thus increasing their reactivity as acceptors for peptidyl transferase. The polypeptide is Elongation factor P (Streptococcus equi subsp. zooepidemicus (strain MGCS10565)).